We begin with the raw amino-acid sequence, 468 residues long: ATP synthase subunit beta (468 aa).

148–155 (GGAGVGKT) lines the ATP pocket.

This sequence belongs to the ATPase alpha/beta chains family. F-type ATPases have 2 components, CF(1) - the catalytic core - and CF(0) - the membrane proton channel. CF(1) has five subunits: alpha(3), beta(3), gamma(1), delta(1), epsilon(1). CF(0) has three main subunits: a(1), b(2) and c(9-12). The alpha and beta chains form an alternating ring which encloses part of the gamma chain. CF(1) is attached to CF(0) by a central stalk formed by the gamma and epsilon chains, while a peripheral stalk is formed by the delta and b chains.

Its subcellular location is the cell membrane. It carries out the reaction ATP + H2O + 4 H(+)(in) = ADP + phosphate + 5 H(+)(out). Functionally, produces ATP from ADP in the presence of a proton gradient across the membrane. The catalytic sites are hosted primarily by the beta subunits. This is ATP synthase subunit beta from Stenotrophomonas maltophilia (strain K279a).